The primary structure comprises 479 residues: Serine carboxypeptidase-like 44 (479 aa).

Positions 1–22 (MVGGKWRFLEVAVVVMVLQWSC) are cleaved as a signal peptide. Cystine bridges form between cysteine 92–cysteine 352, cysteine 253–cysteine 270, and cysteine 295–cysteine 320. A glycan (N-linked (GlcNAc...) asparagine) is linked at asparagine 143. The active site involves serine 184. An N-linked (GlcNAc...) asparagine glycan is attached at asparagine 265. Residue asparagine 341 is glycosylated (N-linked (GlcNAc...) asparagine). Aspartate 389 is an active-site residue. An N-linked (GlcNAc...) asparagine glycan is attached at asparagine 411. Histidine 446 is a catalytic residue.

This sequence belongs to the peptidase S10 family. Expressed in seedlings.

It localises to the secreted. Its function is as follows. Probable carboxypeptidase. This Arabidopsis thaliana (Mouse-ear cress) protein is Serine carboxypeptidase-like 44 (SCPL44).